The primary structure comprises 54 residues: U-reduvitoxin-Pr7a (54 aa).

An N-terminal signal peptide occupies residues 1-23 (MDFLRILLFVLACIMALFTSAIA). Cystine bridges form between C26–C41, C33–C46, and C40–C53.

Belongs to the venom Ptu1-like knottin family. Expressed by the venom gland.

The protein resides in the secreted. Its function is as follows. Binds reversibly and blocks P/Q-type voltage-gated calcium channels (Cav). This chain is U-reduvitoxin-Pr7a, found in Platymeris rhadamanthus (Red spot assassin bug).